We begin with the raw amino-acid sequence, 423 residues long: Major royal jelly protein 9 (423 aa).

An N-terminal signal peptide occupies residues 1–20; sequence MSFNIWWLILYFSIVCQAKA. N-linked (GlcNAc...) asparagine glycosylation is found at Asn-110, Asn-118, Asn-177, Asn-196, and Asn-345.

This sequence belongs to the major royal jelly protein family. As to expression, expressed at very low levels in the hypopharyngeal glands of adult worker bees (at protein level); expression peaks at 12 days post eclosion. Secreted into bee venom in the sting apparatus (at protein level). Expressed in the brains of adult worker bees peaking at 12 days post eclosion (at protein level). Expressed in the spermatheca of adult queen bees (at protein level); expression levels are higher in mated queens than in virgin queens. Along with Mrjp8 expressed at very low levels in the head of worker bees compared to other major royal jelly proteins.

The protein resides in the secreted. Functionally, component of bee sting venom. Component of royal jelly, a substance produced in the hypopharyngeal gland containing proteins, free amino acids, fatty acids, sugars and other nutrients, which is fed to developing larvae by worker nurse bees; may be present only at trace levels. All larvae are fed some royal jelly (also known as worker jelly) early in their development but it forms the principal source of nutrition for larvae destined to become queen bees. Produced in the spermatheca of adult queen bees, along with other major royal jelly proteins, where it may act as a nutrient supply for sperm stored by mated queens, or be involved in energy metabolism. The chain is Major royal jelly protein 9 from Apis mellifera (Honeybee).